Reading from the N-terminus, the 347-residue chain is Glycerol-3-phosphate dehydrogenase [NAD(P)+] (347 aa).

NADPH is bound by residues W20, R39, and K118. Residues K118, G152, and S154 each coordinate sn-glycerol 3-phosphate. Residue A156 coordinates NADPH. Sn-glycerol 3-phosphate-binding residues include K207, D260, S270, R271, and N272. K207 functions as the Proton acceptor in the catalytic mechanism. R271 serves as a coordination point for NADPH. 2 residues coordinate NADPH: V295 and E297.

The protein belongs to the NAD-dependent glycerol-3-phosphate dehydrogenase family.

The protein resides in the cytoplasm. The catalysed reaction is sn-glycerol 3-phosphate + NAD(+) = dihydroxyacetone phosphate + NADH + H(+). It catalyses the reaction sn-glycerol 3-phosphate + NADP(+) = dihydroxyacetone phosphate + NADPH + H(+). It participates in membrane lipid metabolism; glycerophospholipid metabolism. Its function is as follows. Catalyzes the reduction of the glycolytic intermediate dihydroxyacetone phosphate (DHAP) to sn-glycerol 3-phosphate (G3P), the key precursor for phospholipid synthesis. This Cupriavidus pinatubonensis (strain JMP 134 / LMG 1197) (Cupriavidus necator (strain JMP 134)) protein is Glycerol-3-phosphate dehydrogenase [NAD(P)+].